The sequence spans 318 residues: Biotin synthase (318 aa).

A Radical SAM core domain is found at 44 to 270 (LCGDAVNLCS…INPTANIRLA (227 aa)). Positions 62, 66, and 69 each coordinate [4Fe-4S] cluster. Residues Ser106, Cys138, Cys198, and Arg268 each contribute to the [2Fe-2S] cluster site.

This sequence belongs to the radical SAM superfamily. Biotin synthase family. Homodimer. It depends on [4Fe-4S] cluster as a cofactor. Requires [2Fe-2S] cluster as cofactor.

It catalyses the reaction (4R,5S)-dethiobiotin + (sulfur carrier)-SH + 2 reduced [2Fe-2S]-[ferredoxin] + 2 S-adenosyl-L-methionine = (sulfur carrier)-H + biotin + 2 5'-deoxyadenosine + 2 L-methionine + 2 oxidized [2Fe-2S]-[ferredoxin]. The protein operates within cofactor biosynthesis; biotin biosynthesis; biotin from 7,8-diaminononanoate: step 2/2. Functionally, catalyzes the conversion of dethiobiotin (DTB) to biotin by the insertion of a sulfur atom into dethiobiotin via a radical-based mechanism. This chain is Biotin synthase, found in Alkaliphilus metalliredigens (strain QYMF).